Here is a 297-residue protein sequence, read N- to C-terminus: Carbamate kinase (297 aa).

The protein belongs to the carbamate kinase family.

It localises to the cytoplasm. The enzyme catalyses hydrogencarbonate + NH4(+) + ATP = carbamoyl phosphate + ADP + H2O + H(+). The catalysed reaction is carbamate + ATP = carbamoyl phosphate + ADP. It catalyses the reaction hydrogencarbonate + NH4(+) = carbamate + H2O + H(+). Its pathway is nitrogen metabolism; (S)-allantoin degradation. Functionally, kinase involved in the anaerobic nitrogen utilization via the assimilation of allantoin. Catalyzes the transfer of a phosphate group from carbamoyl phosphate to ADP to produce ATP and leave carbamate, which spontaneously hydrolyzes to ammonia and hydrogencarbonate. The chain is Carbamate kinase from Escherichia coli (strain K12).